Consider the following 1225-residue polypeptide: MKKLFVVLVVMPLIYGDKFPTSVVSNCTDQCASYVANVFTTQPGGFIPSDFSFNNWFILTNSSTLVSGKLVTKQPLLVNCLWPVPSFEEAASTFCFEGADFDQCNGAVLNNTVDVIRFNLNFTTNVQSGKGATVFSLNTTGGVTLEISCYNDTVSDSSFSSYGEIPFGVTNGPRYCYVLYNGTALKYLGTLPPSVKEIAISKWGHFYINGYNFFSTFPIDCISFNLTTGDSDVFWTIAYTSYTEALVQVENTAITNVTYCNSYVNNIKCSQLTANLNNGFYPVSSSEVGSVNKSVVLLPSFLTHTIVNITIGLGMKRSGYGQPIASTLSNITLPMQDNNTDVYCVRSDQFSVYVHSTCKSALWDNVFKRNCTDVLDATAVIKTGTCPFSFDKLNNYLTFNKFCLSLSPVGANCKFDVAARTRTNDQFVRSLYVIYEEGDSIVGVPSDNSGLHDLSVLHLDSCTDYNIYGRTGVGIIRQTNRTLLSGLYYTSLSGDLLGFKNVSDGVIYSVTPCDVSAQAAIIDGAIVGAITSINSELLALTHWTITPNFYYYSIYNYTNDKTRGTPIGSNDVDCEPVITYSNIGVCKNGALVFINVTHSDGDVQPISTGNVTIPTNFTISVQVEYIQVYTTPVSIDCSRYVCNGNPRCNKLLTQYVSACQTIEQALAMGARLENMEVDSMLFVSENALKLASVEAFNSSETLDPIYKEWPNIGGFWLEGLKYILPSDNSKRKYRSAIEDLLFSKVVTSGLGTVDEDYKRCTGGYDIADLVCAQYYNGIMVLPGVANADKMTMYTASLAGGITLGALGGGAVAIPFAVAVQARLNYVALQTDVLNKNQQILASAFNQAIGNITQSFGKVNDAIHQTSRGLTTVAKALAKVQDVVNTQGQALRHLTVQLQNNFQAISSSISDIYNRLDELSADAQVDRLITGRLTALNAFVSQTLTRQAEVRASRQLAKDKVNECVKSQSHRFGFCGNGTHLFSLANAAPNGMIFFHTVLLPTAYETVTAWSGICALDGDRTFGLVVKDVQLTLFRNLDDNFYLTPRTMYQPRVATSSDFVQIEGCDVLFVNTTVSDLPSIIPDYIDINQTVQDILENFRPNWTVPELTMDVFNATYLNLTGEIDDLEFRSEKLHNTTVELAILIDNINNTLVNLEWLNRIETYVKWPWYVWLLIGLVVIFCIPLLLFCCCSTGCCGCIGCLGSCCHSIFSRRQFENYEPIEKVHVH.

The first 12 residues, 1–12 (MKKLFVVLVVMP), serve as a signal peptide directing secretion. S1 regions lie at residues 13-552 (LIYG…FYYY) and 17-552 (DKFP…FYYY). Over 13–1166 (LIYGDKFPTS…NRIETYVKWP (1154 aa)) the chain is Virion surface. Positions 433 to 577 (VIYEEGDSIV…GSNDVDCEPV (145 aa)) are interaction with host ANPEP. The interval 553-1225 (SIYNYTNDKT…YEPIEKVHVH (673 aa)) is S2. Residues 798 to 819 (AGGITLGALGGGAVAIPFAVAV) form a fusion peptide region. The tract at residues 813–932 (IPFAVAVQAR…QVDRLITGRL (120 aa)) is heptad repeat 1 (HR1). Coiled-coil stretches lie at residues 880 to 924 (QDVV…DAQV) and 1114 to 1156 (TYLN…LEWL). Residues 1081–1178 (PDYIDINQTV…VWLLIGLVVI (98 aa)) are heptad repeat 2 (HR2). The helical transmembrane segment at 1167–1186 (WYVWLLIGLVVIFCIPLLLF) threads the bilayer. Residues 1187-1225 (CCCSTGCCGCIGCLGSCCHSIFSRRQFENYEPIEKVHVH) lie on the Intravirion side of the membrane. The KxHxx signature appears at 1221-1225 (KVHVH).

Belongs to the alphacoronaviruses spike protein family. In terms of assembly, homotrimer. During virus morphogenesis, found in a complex with M and HE proteins. Interacts with host ANPEP.

Its subcellular location is the virion membrane. The protein resides in the host endoplasmic reticulum-Golgi intermediate compartment membrane. Its function is as follows. S1 region attaches the virion to the cell membrane by interacting with host ANPEP/aminopeptidase N, initiating the infection. Binding to the receptor probably induces conformational changes in the S glycoprotein unmasking the fusion peptide of S2 region and activating membranes fusion. S2 region belongs to the class I viral fusion protein. Under the current model, the protein has at least 3 conformational states: pre-fusion native state, pre-hairpin intermediate state, and post-fusion hairpin state. During viral and target cell membrane fusion, the coiled coil regions (heptad repeats) regions assume a trimer-of-hairpins structure, positioning the fusion peptide in close proximity to the C-terminal region of the ectodomain. The formation of this structure appears to drive apposition and subsequent fusion of viral and target cell membranes. The polypeptide is Spike glycoprotein (Sus scrofa (Pig)).